We begin with the raw amino-acid sequence, 356 residues long: MSRIVLRREGTVEFYAPDPRAYGSIYSAPVFYNPAMEKNRTLSVLFLKAYGATGLTVCEPLSGTGVRGIRYAVETGAVGRLILNDISREAVELIKKNLEVNGVDAEVYNEDANVLLHRLRDKCDVVDIDPFGSPAPFLQAGFRALREEGVICVTATDTAVLVGRYPKKCLRRYGAVMFKTPFYIEAGLRNLTGYVARVAASEDYGFEPLFAYWEGHYFRLCARAVRGARDADSNFNFIGYVEYKKPSRKVVRRPGERSLGPLWVGPMGDPILVNKMAEYGPYGDFLQLLSEEYSVAAPWFFKVPEFALGGVSRGIEEALNALKKGGIYAVRTHMAPDGFKTEVSAGEVERVLRIVI.

The Trm1 methyltransferase domain maps to 5–352 (VLRREGTVEF…VSAGEVERVL (348 aa)). Arginine 40, arginine 67, aspartate 85, aspartate 111, and alanine 112 together coordinate S-adenosyl-L-methionine.

Belongs to the class I-like SAM-binding methyltransferase superfamily. Trm1 family.

It carries out the reaction guanosine(26) in tRNA + 2 S-adenosyl-L-methionine = N(2)-dimethylguanosine(26) in tRNA + 2 S-adenosyl-L-homocysteine + 2 H(+). Its function is as follows. Dimethylates a single guanine residue at position 26 of a number of tRNAs using S-adenosyl-L-methionine as donor of the methyl groups. The protein is tRNA (guanine(26)-N(2))-dimethyltransferase of Pyrobaculum arsenaticum (strain DSM 13514 / JCM 11321 / PZ6).